The chain runs to 284 residues: 2-dehydro-3-deoxyphosphooctonate aldolase (284 aa).

The protein belongs to the KdsA family.

The protein resides in the cytoplasm. The catalysed reaction is D-arabinose 5-phosphate + phosphoenolpyruvate + H2O = 3-deoxy-alpha-D-manno-2-octulosonate-8-phosphate + phosphate. It participates in carbohydrate biosynthesis; 3-deoxy-D-manno-octulosonate biosynthesis; 3-deoxy-D-manno-octulosonate from D-ribulose 5-phosphate: step 2/3. It functions in the pathway bacterial outer membrane biogenesis; lipopolysaccharide biosynthesis. The protein is 2-dehydro-3-deoxyphosphooctonate aldolase of Methylobacterium radiotolerans (strain ATCC 27329 / DSM 1819 / JCM 2831 / NBRC 15690 / NCIMB 10815 / 0-1).